The sequence spans 176 residues: Lactoylglutathione lyase (176 aa).

The 145-residue stretch at 23 to 167 (VFNHTMLRVK…DGYWVEIVQA (145 aa)) folds into the VOC domain. Ni(2+) is bound at residue H26. R30 is a binding site for substrate. Position 92 (E92) interacts with Ni(2+). 3 residues coordinate substrate: N96, R114, and H118. Residues H118 and E163 each coordinate Ni(2+). Catalysis depends on E163, which acts as the Proton donor/acceptor.

This sequence belongs to the glyoxalase I family. In terms of assembly, monomer. The cofactor is Ni(2+). Requires Zn(2+) as cofactor.

The enzyme catalyses (R)-S-lactoylglutathione = methylglyoxal + glutathione. Its pathway is secondary metabolite metabolism; methylglyoxal degradation; (R)-lactate from methylglyoxal: step 1/2. In terms of biological role, catalyzes the conversion of hemimercaptal, formed from methylglyoxal and glutathione, to S-lactoylglutathione. This Pseudomonas aeruginosa (strain ATCC 15692 / DSM 22644 / CIP 104116 / JCM 14847 / LMG 12228 / 1C / PRS 101 / PAO1) protein is Lactoylglutathione lyase (gloA).